A 199-amino-acid chain; its full sequence is Prolactin-1 (199 aa).

3 cysteine pairs are disulfide-bonded: C4–C11, C58–C174, and C191–C199. The N-linked (GlcNAc...) asparagine glycan is linked to N60.

The protein belongs to the somatotropin/prolactin family. Glycosylated.

The protein localises to the secreted. The sequence is that of Prolactin-1 from Alligator mississippiensis (American alligator).